Here is a 62-residue protein sequence, read N- to C-terminus: Large ribosomal subunit protein bL32m (62 aa).

Belongs to the bacterial ribosomal protein bL32 family.

It localises to the mitochondrion. This is Large ribosomal subunit protein bL32m (RPL32) from Reclinomonas americana.